Here is a 387-residue protein sequence, read N- to C-terminus: Phosphoglycerate kinase (387 aa).

Substrate-binding positions include 21–23, arginine 36, 59–62, arginine 113, and arginine 146; these read DLN and HLGR. ATP-binding positions include lysine 197, glutamate 314, and 340 to 343; that span reads GGDT.

It belongs to the phosphoglycerate kinase family. As to quaternary structure, monomer.

Its subcellular location is the cytoplasm. It carries out the reaction (2R)-3-phosphoglycerate + ATP = (2R)-3-phospho-glyceroyl phosphate + ADP. Its pathway is carbohydrate degradation; glycolysis; pyruvate from D-glyceraldehyde 3-phosphate: step 2/5. The polypeptide is Phosphoglycerate kinase (Pectobacterium carotovorum subsp. carotovorum (strain PC1)).